The sequence spans 590 residues: Aspartate--tRNA(Asp/Asn) ligase (590 aa).

Glutamate 173 serves as a coordination point for L-aspartate. Residues glutamine 197–lysine 200 form an aspartate region. L-aspartate is bound at residue arginine 219. Residues arginine 219–glutamate 221 and glutamine 228 each bind ATP. Histidine 450 serves as a coordination point for L-aspartate. Residue glutamate 484 participates in ATP binding. L-aspartate is bound at residue arginine 491. Glycine 536–arginine 539 contacts ATP.

Belongs to the class-II aminoacyl-tRNA synthetase family. Type 1 subfamily. In terms of assembly, homodimer.

The protein localises to the cytoplasm. The catalysed reaction is tRNA(Asx) + L-aspartate + ATP = L-aspartyl-tRNA(Asx) + AMP + diphosphate. Aspartyl-tRNA synthetase with relaxed tRNA specificity since it is able to aspartylate not only its cognate tRNA(Asp) but also tRNA(Asn). Reaction proceeds in two steps: L-aspartate is first activated by ATP to form Asp-AMP and then transferred to the acceptor end of tRNA(Asp/Asn). The protein is Aspartate--tRNA(Asp/Asn) ligase of Coxiella burnetii (strain Dugway 5J108-111).